A 92-amino-acid chain; its full sequence is LYR motif-containing protein 4 homolog (92 aa).

Residues 40–68 (ANKAIRDFAEIDRQMEAGKQNLELIRRQV) adopt a coiled-coil conformation.

The protein belongs to the complex I LYR family. As to quaternary structure, component of the mitochondrial core iron-sulfur cluster (ISC) assembly complex at least composed of the cysteine desulfurase Nfs1, the scaffold protein IscU, the accessory protein bcn92/Isd11/Lyrm4, and probably fh/frataxin. Interacts with Nfs1.

The protein localises to the mitochondrion. Functionally, stabilizing factor of the core iron-sulfur cluster (ISC) assembly complex that regulates the stability and cysteine desulfurase activity of Nfs1 and participates in the [2Fe-2S] clusters assembly on the scaffolding protein IscU. The sequence is that of LYR motif-containing protein 4 homolog from Drosophila subobscura (Fruit fly).